The primary structure comprises 791 residues: KN motif and ankyrin repeat domain-containing protein 3 (791 aa).

5 disordered regions span residues 1–37, 56–181, 254–312, 401–425, and 463–514; these read MAKF…SVET, RGPA…GPAQ, ATSD…ETRE, GCTE…GDEM, and YESS…GDCE. Polar residues predominate over residues 25–34; it reads SARSPSSPYS. A compositionally biased stretch (low complexity) spans 105-125; sequence LSPGAFPGLSLPPLSPRSLSR. The span at 127–149 shows a compositional bias: basic and acidic residues; the sequence is PRVEHTLLETSRRLEQAQARERA. Phosphoserine occurs at positions 151, 159, 163, 166, 167, and 176. Residues 158 to 180 show a composition bias toward low complexity; that stretch reads RSPRGSGRSSPAPNPALASPGPA. Residues 180–229 are a coiled coil; it reads AQLQLVREQMAAALRRLRELEDQARALPELQEQVRALRAEKARLLAGRVQ. Basic and acidic residues-rich tracts occupy residues 254–280 and 293–312; these read ATSD…RRSE and PDGE…ETRE. Ser279 is subject to Phosphoserine. Over residues 401–410 the composition is skewed to polar residues; sequence GCTEKTTQTE. Positions 485 to 496 are enriched in low complexity; sequence SSSSGSDDSSGG. The span at 505–514 shows a compositional bias: basic and acidic residues; the sequence is HNDKDAGDCE. 5 ANK repeats span residues 606–636, 640–677, 679–708, 712–742, and 746–775; these read NGNT…DVNH, AGYS…AKAS, TGQT…DVNV, DGAT…DLTI, and EGTS…SNHQ. The span at 772–783 shows a compositional bias: polar residues; the sequence is SNHQGQSSTGSP. The disordered stretch occupies residues 772-791; sequence SNHQGQSSTGSPTAKECNDK.

In terms of biological role, may be involved in the control of cytoskeleton formation by regulating actin polymerization. The sequence is that of KN motif and ankyrin repeat domain-containing protein 3 from Mus musculus (Mouse).